A 295-amino-acid polypeptide reads, in one-letter code: Ethanolamine ammonia-lyase small subunit (295 aa).

Adenosylcob(III)alamin contacts are provided by Val-207, Glu-228, and Cys-258.

This sequence belongs to the EutC family. The basic unit is a heterodimer which dimerizes to form tetramers. The heterotetramers trimerize; 6 large subunits form a core ring with 6 small subunits projecting outwards. It depends on adenosylcob(III)alamin as a cofactor.

It is found in the bacterial microcompartment. The enzyme catalyses ethanolamine = acetaldehyde + NH4(+). Its pathway is amine and polyamine degradation; ethanolamine degradation. Catalyzes the deamination of various vicinal amino-alcohols to oxo compounds. Allows this organism to utilize ethanolamine as the sole source of nitrogen and carbon in the presence of external vitamin B12. The polypeptide is Ethanolamine ammonia-lyase small subunit (Escherichia coli (strain 55989 / EAEC)).